A 1274-amino-acid polypeptide reads, in one-letter code: Regulator of telomere elongation helicase 1 (1274 aa).

In terms of domain architecture, Helicase ATP-binding spans 7-296; the sequence is NGVTVDFPFQ…ARVAQHGELQ (290 aa). Residue 42–49 participates in ATP binding; it reads SPTGTGKT. Positions 145, 163, 172, and 207 each coordinate [4Fe-4S] cluster. Residues 151-167 carry the Nuclear localization signal motif; sequence KKQESNHMQISLCRKKV. Residues 250–253 carry the DEAH box motif; that stretch reads DEAH. Positions 871–877 match the Nuclear localization signal motif; that stretch reads QRGGKKK. Disordered stretches follow at residues 982 to 1002, 1014 to 1038, and 1143 to 1198; these read NSLPFGEQAQSTASKQGRREL, RQLDPGEHLNQGWPHLSTHLTSKGD, and ELPC…DDTI. Positions 1186–1196 are enriched in basic and acidic residues; the sequence is QRPDQSARSDD.

Belongs to the helicase family. RAD3/XPD subfamily. As to quaternary structure, interacts with TERF1. Interacts (via PIP-box) with PCNA; the interaction is direct and essential for suppressing telomere fragility. Interacts with MMS19; the interaction mediates the association of RTEL1 with the cytosolic iron-sulfur protein assembly (CIA) complex.

It is found in the nucleus. The catalysed reaction is ATP + H2O = ADP + phosphate + H(+). A probable ATP-dependent DNA helicase implicated in telomere-length regulation, DNA repair and the maintenance of genomic stability. Acts as an anti-recombinase to counteract toxic recombination and limit crossover during meiosis. Regulates meiotic recombination and crossover homeostasis by physically dissociating strand invasion events and thereby promotes noncrossover repair by meiotic synthesis dependent strand annealing (SDSA) as well as disassembly of D loop recombination intermediates. Also disassembles T loops and prevents telomere fragility by counteracting telomeric G4-DNA structures, which together ensure the dynamics and stability of the telomere. The chain is Regulator of telomere elongation helicase 1 (Rtel1) from Rattus norvegicus (Rat).